The primary structure comprises 534 residues: Cytochrome P450 monooxygenase ascG (534 aa).

The chain crosses the membrane as a helical span at residues 13 to 33 (FVASFPALSAAAGLIVAISFI). N-linked (GlcNAc...) asparagine glycosylation occurs at asparagine 466. Heme is bound at residue cysteine 469.

This sequence belongs to the cytochrome P450 family. Requires heme as cofactor.

The protein resides in the membrane. It carries out the reaction ilicicolin C + NADPH + O2 + H(+) = ascochlorin + NADP(+) + 2 H2O. It functions in the pathway secondary metabolite biosynthesis; terpenoid biosynthesis. Cytochrome P450 monooxygenase; part of the asc-1 gene cluster that mediates the biosynthesis of both ascochlorin and ascofuranone, a strong inhibitor of cyanide-insensitive alternative oxidases and a promising drug candidate against African trypanosomiasis. The first step in the pathway is performed by the non-reducing polyketide synthase ascC that produces orsellinic acid by condensing acetyl-CoA with 3 malonyl-CoA units. Orsellinic acid is then prenylated by the prenyltransferase ascA to yield ilicicolinic acid B. Ilicicolinic acid B is further reduced to ilicicolin B by the reductase ascB. The halogenase ascD then chlorinates ilicicolin B to produce ilicicolin A which is converted to ilicicolin A epoxide by the cytochrome P450 monooxygenase ascE that catalyzes stereoselective epoxidation of the terminal double bond of the prenyl group. Ilicicolin A epoxide is the last common precursor for the biosynthesis of ascofuranone and ascochlorin. The terpene cyclase ascF produces a monocyclic terpene, and the cyclization reaction is proposed to be initiated by protonation of the terminal epoxide of ilicicolin A epoxide to generate a monocyclic tertiarycation, which is followed by a series of hydride and methyl shifts with abstraction of proton, leading to the formation of the (14S,15R,19R)-trimethylcyclohexanone ring structure of ilicicolin C, which is finally reduced to ascochlorin by the dehydrogenase ascG. On the other hand, ilicicolin A epoxide is hydroxylated by the cytochrome P450 monooxygenase ascH, and the resultant product is cyclized by the terpene cyclase ascI to ascofuranol via protonation-initiated epoxide ring opening, which facilitates the 6-endo-tet cyclization to form the tetrahy-drofuran ring. Finally, ascofuranol is oxidized into ascofuranone by ascJ. The protein is Cytochrome P450 monooxygenase ascG of Acremonium egyptiacum (Oospora egyptiaca).